A 102-amino-acid chain; its full sequence is MAKKSIVQRNLRRIKLCDQYGEKRERLKSIINNKNIPIGERFAAQNKLIKELPRDSSKIRIRNRCALTGRPRGVYRKFGLCRIVLRGLCSFGKIPGITKSSW.

The protein belongs to the universal ribosomal protein uS14 family. In terms of assembly, part of the 30S ribosomal subunit. Contacts proteins S3 and S10.

In terms of biological role, binds 16S rRNA, required for the assembly of 30S particles and may also be responsible for determining the conformation of the 16S rRNA at the A site. The polypeptide is Small ribosomal subunit protein uS14 (Wolbachia sp. subsp. Brugia malayi (strain TRS)).